Reading from the N-terminus, the 156-residue chain is tRNA (cytidine(34)-2'-O)-methyltransferase (156 aa).

S-adenosyl-L-methionine is bound by residues glycine 102, leucine 124, and serine 132.

It belongs to the class IV-like SAM-binding methyltransferase superfamily. RNA methyltransferase TrmH family. TrmL subfamily. Homodimer.

It localises to the cytoplasm. The catalysed reaction is cytidine(34) in tRNA + S-adenosyl-L-methionine = 2'-O-methylcytidine(34) in tRNA + S-adenosyl-L-homocysteine + H(+). It carries out the reaction 5-carboxymethylaminomethyluridine(34) in tRNA(Leu) + S-adenosyl-L-methionine = 5-carboxymethylaminomethyl-2'-O-methyluridine(34) in tRNA(Leu) + S-adenosyl-L-homocysteine + H(+). Its function is as follows. Methylates the ribose at the nucleotide 34 wobble position in the two leucyl isoacceptors tRNA(Leu)(CmAA) and tRNA(Leu)(cmnm5UmAA). Catalyzes the methyl transfer from S-adenosyl-L-methionine to the 2'-OH of the wobble nucleotide. The chain is tRNA (cytidine(34)-2'-O)-methyltransferase from Burkholderia pseudomallei (strain 1106a).